Consider the following 141-residue polypeptide: Large ribosomal subunit protein uL11c (141 aa).

The protein belongs to the universal ribosomal protein uL11 family. In terms of assembly, part of the ribosomal stalk of the 50S ribosomal subunit. Interacts with L10 and the large rRNA to form the base of the stalk. L10 forms an elongated spine to which L12 dimers bind in a sequential fashion forming a multimeric L10(L12)X complex.

It localises to the plastid. The protein resides in the chloroplast. Forms part of the ribosomal stalk which helps the ribosome interact with GTP-bound translation factors. This is Large ribosomal subunit protein uL11c from Thalassiosira pseudonana (Marine diatom).